The following is a 145-amino-acid chain: Large ribosomal subunit protein uL15 (145 aa).

The tract at residues 20-39 is disordered; that stretch reads GRVGKHRKHPSGRGNAGGEH.

Belongs to the universal ribosomal protein uL15 family.

This is Large ribosomal subunit protein uL15 (RPL27A) from Trypanosoma brucei brucei.